The primary structure comprises 398 residues: Acetate kinase 1 (398 aa).

Asn9 provides a ligand contact to Mg(2+). Lys16 is an ATP binding site. Residue Arg89 coordinates substrate. Residue Asp146 is the Proton donor/acceptor of the active site. ATP is bound by residues His206–Gly210, Asp281–Arg283, and Gly329–Asn333. Glu384 provides a ligand contact to Mg(2+).

This sequence belongs to the acetokinase family. In terms of assembly, homodimer. It depends on Mg(2+) as a cofactor. Mn(2+) serves as cofactor.

Its subcellular location is the cytoplasm. The enzyme catalyses acetate + ATP = acetyl phosphate + ADP. The protein operates within metabolic intermediate biosynthesis; acetyl-CoA biosynthesis; acetyl-CoA from acetate: step 1/2. Its function is as follows. Catalyzes the formation of acetyl phosphate from acetate and ATP. Can also catalyze the reverse reaction. This chain is Acetate kinase 1, found in Vibrio cholerae serotype O1 (strain ATCC 39315 / El Tor Inaba N16961).